The primary structure comprises 898 residues: Serine/threonine-protein kinase TAO3 (898 aa).

The Protein kinase domain occupies 24–277; sequence FIGLHEIGHG…SAELLRHDFV (254 aa). ATP contacts are provided by residues 30 to 38 and Lys-53; that span reads IGHGSFGAV. Residue Asp-147 is the Proton acceptor of the active site. Disordered stretches follow at residues 316-362 and 405-425; these read TRNG…SQSS and DEAG…VQSQ. The residue at position 324 (Ser-324) is a Phosphoserine; by ATM. Ser-331, Ser-343, Ser-346, and Ser-349 each carry phosphoserine. Polar residues predominate over residues 334–351; sequence GTSLNREMDSLGSNHSIP. Residues 352-362 are compositionally biased toward low complexity; that stretch reads SMSVSTGSQSS. Thr-357 is subject to Phosphothreonine. Ser-359 is subject to Phosphoserine. Residues 405 to 416 show a composition bias toward basic and acidic residues; it reads DEAGHGDPRPEP. Ser-442 carries the post-translational modification Phosphoserine. 3 coiled-coil regions span residues 452-502, 548-649, and 754-879; these read EQEN…THAN, FLES…HAML, and LKTL…DMES. The interval 565 to 596 is disordered; sequence EEMNEDHSTPKKEKQERISKHKENLQHTQAEE. At Lys-830 the chain carries N6-acetyllysine.

Belongs to the protein kinase superfamily. STE Ser/Thr protein kinase family. STE20 subfamily. As to quaternary structure, self-associates. Interacts with ERN1 and TRAF2. Interaction with TRAF2 is facilitated under ER stress conditions, such as treatment with tunicamycin, and may promote TRAF2 phosphorylation. Interacts (via N-terminus) with STK25; the interaction promotes STK25 abundance at the level of protein expression and/or stability. Autophosphorylated. Phosphorylation at Ser-324 by ATM following DNA damage is required for activation of the p38/MAPK14 stress-activated MAPK cascade. Phosphorylated at Ser-324 and on Tyr residues during T cell activation. Phosphorylated by LRRK2.

Its subcellular location is the cytoplasm. It is found in the cell membrane. The protein resides in the membrane raft. The protein localises to the lipid droplet. It carries out the reaction L-seryl-[protein] + ATP = O-phospho-L-seryl-[protein] + ADP + H(+). The catalysed reaction is L-threonyl-[protein] + ATP = O-phospho-L-threonyl-[protein] + ADP + H(+). Functionally, serine/threonine-protein kinase that acts as a regulator of the p38/MAPK14 stress-activated MAPK cascade and of the MAPK8/JNK cascade. In response to DNA damage, involved in the G2/M transition DNA damage checkpoint by activating the p38/MAPK14 stress-activated MAPK cascade, probably by mediating phosphorylation of upstream MAP2K3 and MAP2K6 kinases. Inhibits basal activity of the MAPK8/JNK cascade and diminishes its activation in response to epidermal growth factor (EGF). Positively regulates canonical T cell receptor (TCR) signaling by preventing early PTPN6/SHP1-mediated inactivation of LCK, ensuring sustained TCR signaling that is required for optimal activation and differentiation of T cells. Phosphorylates PTPN6/SHP1 on 'Thr-394', leading to its polyubiquitination and subsequent proteasomal degradation. Required for cell surface expression of metalloprotease ADAM10 on type 1 transitional B cells which is necessary for their NOTCH-mediated development into marginal zone B cells. Also required for the NOTCH-mediated terminal differentiation of splenic conventional type 2 dendritic cells. Positively regulates osteoblast differentiation by acting as an upstream activator of the JNK pathway. Promotes JNK signaling in hepatocytes and positively regulates hepatocyte lipid storage by inhibiting beta-oxidation and triacylglycerol secretion while enhancing lipid synthesis. Restricts age-associated inflammation by negatively regulating differentiation of macrophages and their production of pro-inflammatory cytokines. Plays a role in negatively regulating the abundance of regulatory T cells in white adipose tissue. This chain is Serine/threonine-protein kinase TAO3 (TAOK3), found in Pongo abelii (Sumatran orangutan).